The sequence spans 57 residues: Light-harvesting protein B-808/866 alpha chain (57 aa).

Met1 is subject to N-formylmethionine. The Cytoplasmic portion of the chain corresponds to 1–10 (MQPRSPVRTN). The chain crosses the membrane as a helical span at residues 11-30 (IVIFTILGFVVALLIHFIVL). His26 is a binding site for a bacteriochlorophyll. The Periplasmic segment spans residues 31 to 57 (SSPEYNWLSNAEGGALLLSAARALFGI).

It belongs to the antenna complex alpha subunit family. The core complex is formed by different alpha and beta chains, binding bacteriochlorophyll molecules, and arranged most probably in tetrameric structures disposed around the reaction center. The non-pigmented gamma chains may constitute additional components.

The protein resides in the cell membrane. Antenna complexes are light-harvesting systems, which transfer the excitation energy to the reaction centers. This is Light-harvesting protein B-808/866 alpha chain (puf2A) from Chloroflexus aurantiacus (strain ATCC 29366 / DSM 635 / J-10-fl).